A 451-amino-acid chain; its full sequence is D-aminoacyl-tRNA deacylase (451 aa).

The interval 410–437 (RTADIPEGPKFGKLASGESVEIDGEEID) is disordered.

It belongs to the DtdA deacylase family. In terms of assembly, monomer. Zn(2+) is required as a cofactor.

It catalyses the reaction a D-aminoacyl-tRNA + H2O = a tRNA + a D-alpha-amino acid + H(+). The enzyme catalyses glycyl-tRNA(Ala) + H2O = tRNA(Ala) + glycine + H(+). In terms of biological role, D-aminoacyl-tRNA deacylase with broad substrate specificity. By recycling D-aminoacyl-tRNA to D-amino acids and free tRNA molecules, this enzyme counteracts the toxicity associated with the formation of D-aminoacyl-tRNA entities in vivo. This Haloarcula marismortui (strain ATCC 43049 / DSM 3752 / JCM 8966 / VKM B-1809) (Halobacterium marismortui) protein is D-aminoacyl-tRNA deacylase.